The chain runs to 215 residues: 3,4-dihydroxy-2-butanone 4-phosphate synthase (215 aa).

D-ribulose 5-phosphate contacts are provided by residues 38–39 (RE), aspartate 43, 151–155 (RRGHT), and glutamate 175. Glutamate 39 lines the Mg(2+) pocket. Histidine 154 is a binding site for Mg(2+).

The protein belongs to the DHBP synthase family. Homodimer. Mg(2+) serves as cofactor. Mn(2+) is required as a cofactor.

The enzyme catalyses D-ribulose 5-phosphate = (2S)-2-hydroxy-3-oxobutyl phosphate + formate + H(+). Its pathway is cofactor biosynthesis; riboflavin biosynthesis; 2-hydroxy-3-oxobutyl phosphate from D-ribulose 5-phosphate: step 1/1. In terms of biological role, catalyzes the conversion of D-ribulose 5-phosphate to formate and 3,4-dihydroxy-2-butanone 4-phosphate. The chain is 3,4-dihydroxy-2-butanone 4-phosphate synthase from Haemophilus influenzae (strain PittEE).